A 739-amino-acid chain; its full sequence is Homeobox protein SIX5 (739 aa).

3 stretches are compositionally biased toward low complexity: residues 1–24, 34–61, and 74–83; these read MATL…AAAA, QLLQ…AAGA, and PEAASEPPTG. 4 disordered regions span residues 1–84, 251–294, 361–381, and 617–650; these read MATL…PTGL, NRRQ…AAPV, LTGG…SETK, and LSAQ…FPAP. The homeobox DNA-binding region spans 201–260; the sequence is GEETVYCFKERSRAALKACYRGNRYPTPDEKRRLATLTGLSLTQVSNWFKNRRQRDRTGA. Basic and acidic residues predominate over residues 279 to 289; that stretch reads ESSRSPEDLER. The span at 617 to 646 shows a compositional bias: low complexity; it reads LSAQQPPPAAATTSSTSLPFSPDSPGLLPN.

Belongs to the SIX/Sine oculis homeobox family. Probably binds DNA dimer. Interacts with EYA3, and probably EYA1 and EYA2. In terms of tissue distribution, expressed in adult but not in fetal eyes. Found in corneal epithelium and endothelium, lens epithelium, ciliary body epithelia, cellular layers of the retina and the sclera.

The protein localises to the cytoplasm. It localises to the nucleus. Functionally, transcription factor that is thought to be involved in regulation of organogenesis. May be involved in determination and maintenance of retina formation. Binds a 5'-GGTGTCAG-3' motif present in the ARE regulatory element of ATP1A1. Binds a 5'-TCA[AG][AG]TTNC-3' motif present in the MEF3 element in the myogenin promoter, and in the IGFBP5 promoter. Thought to be regulated by association with Dach and Eya proteins, and seems to be coactivated by EYA1, EYA2 and EYA3. The protein is Homeobox protein SIX5 (SIX5) of Homo sapiens (Human).